Consider the following 315-residue polypeptide: MTRTDIERPVRTQAEEKARYEGNKLSKRLARETTRALSDYNMIEEGDRVMVCLSGGKDSYAMLDILMALQKRAPFRFELIAVNLDQKQPGFPADILPNYLSSLGVPFHIETQDTYSIVTRVLAEGKTMCSLCSRLRRGILYRVADELGATKIALGHHRDDILGTLFLNLFYGGKLKGMPPKLVSDDGRHTVIRPLAYIAETDLIAYAELKQFPIIPCNLCGSQENLKRKEVSRMVQEWDRKFPGRSWNVFNALSRVVPSHLMDRDLFDFVGLKPTGLPDANGDIAFDEPQTDDACDASAPTDGLNEQQIVFSRFS.

The short motif at 54-59 (SGGKDS) is the PP-loop motif element. [4Fe-4S] cluster is bound by residues Cys129, Cys132, and Cys220.

This sequence belongs to the TtcA family. As to quaternary structure, homodimer. Mg(2+) serves as cofactor. It depends on [4Fe-4S] cluster as a cofactor.

The protein resides in the cytoplasm. It carries out the reaction cytidine(32) in tRNA + S-sulfanyl-L-cysteinyl-[cysteine desulfurase] + AH2 + ATP = 2-thiocytidine(32) in tRNA + L-cysteinyl-[cysteine desulfurase] + A + AMP + diphosphate + H(+). It participates in tRNA modification. In terms of biological role, catalyzes the ATP-dependent 2-thiolation of cytidine in position 32 of tRNA, to form 2-thiocytidine (s(2)C32). The sulfur atoms are provided by the cysteine/cysteine desulfurase (IscS) system. In Bordetella avium (strain 197N), this protein is tRNA-cytidine(32) 2-sulfurtransferase.